Reading from the N-terminus, the 212-residue chain is Nucleoredoxin-like protein 1 (212 aa).

Residues 1-164 (MASLFSGRIL…AAEVLDRNFQ (164 aa)) form the Thioredoxin domain. Positions 191–212 (AARGGRDPGGGGGEEGGAGGLF) are disordered. The span at 197–212 (DPGGGGGEEGGAGGLF) shows a compositional bias: gly residues.

Belongs to the nucleoredoxin family. Interacts with isoform 1 of BSG.

It is found in the cell projection. It localises to the cilium. The protein localises to the photoreceptor outer segment. Plays an important role in retinal cone photoreceptor survival. In association with glucose transporter SLC16A1/GLUT1 and BSG, promotes retinal cone survival by enhancing aerobic glycolysis and accelerating the entry of glucose into photoreceptors. May play a role in cone cell viability, slowing down cone degeneration, does not seem to play a role in degenerating rods. This is Nucleoredoxin-like protein 1 (NXNL1) from Homo sapiens (Human).